Consider the following 468-residue polypeptide: Aldehyde dehydrogenase family 3 member B1 (468 aa).

Met1 carries the post-translational modification N-acetylmethionine. NAD(+) is bound at residue 188–193 (GNPQVG). Active-site residues include Glu210 and Cys244. Cys463 carries S-palmitoyl cysteine lipidation. Residue Cys465 is modified to Cysteine methyl ester. Cys465 carries S-geranylgeranyl cysteine lipidation. A propeptide spans 466-468 (TLL) (removed in mature form).

This sequence belongs to the aldehyde dehydrogenase family. In terms of processing, dually lipidated in the C-terminus; prenylation occurs prior to, and is a prerequisite for palmitoylation. It is also required for activity towards long-chain substrates.

Its subcellular location is the cell membrane. The enzyme catalyses an aldehyde + NAD(+) + H2O = a carboxylate + NADH + 2 H(+). It carries out the reaction a long-chain fatty aldehyde + NAD(+) + H2O = a long-chain fatty acid + NADH + 2 H(+). The catalysed reaction is a medium-chain fatty aldehyde + NAD(+) + H2O = a medium-chain fatty acid + NADH + 2 H(+). It catalyses the reaction octanal + NAD(+) + H2O = octanoate + NADH + 2 H(+). The enzyme catalyses nonanal + NAD(+) + H2O = nonanoate + NADH + 2 H(+). It carries out the reaction hexadecanoate + NADH + 2 H(+) = hexadecanal + NAD(+) + H2O. The catalysed reaction is (2E)-octenal + NAD(+) + H2O = (2E)-octenoate + NADH + 2 H(+). It catalyses the reaction (E)-non-2-enal + NAD(+) + H2O = (E)-non-2-enoate + NADH + 2 H(+). The enzyme catalyses (E)-4-hydroxynon-2-enal + NAD(+) + H2O = (E)-4-hydroxynon-2-enoate + NADH + 2 H(+). It carries out the reaction (2E)-hexadecenal + NAD(+) + H2O = (E)-hexadec-2-enoate + NADH + 2 H(+). The catalysed reaction is benzaldehyde + NAD(+) + H2O = benzoate + NADH + 2 H(+). It catalyses the reaction an aldehyde + NADP(+) + H2O = a carboxylate + NADPH + 2 H(+). The enzyme catalyses a medium-chain fatty aldehyde + NADP(+) + H2O = a medium-chain fatty acid + NADPH + 2 H(+). It carries out the reaction hexanal + NADP(+) + H2O = hexanoate + NADPH + 2 H(+). The catalysed reaction is octanal + NADP(+) + H2O = octanoate + NADPH + 2 H(+). It catalyses the reaction nonanal + NADP(+) + H2O = nonanoate + NADPH + 2 H(+). The enzyme catalyses (2E)-octenal + NADP(+) + H2O = (2E)-octenoate + NADPH + 2 H(+). It carries out the reaction (E)-non-2-enal + NADP(+) + H2O = (E)-non-2-enoate + NADPH + 2 H(+). The catalysed reaction is (E)-4-hydroxynon-2-enal + NADP(+) + H2O = (E)-4-hydroxynon-2-enoate + NADPH + 2 H(+). It catalyses the reaction benzaldehyde + NADP(+) + H2O = benzoate + NADPH + 2 H(+). It participates in alcohol metabolism; ethanol degradation; acetate from ethanol: step 2/2. Its function is as follows. Oxidizes medium and long chain saturated and unsaturated fatty aldehydes generated in the plasma membrane into non-toxic fatty acids. May have a protective role against the cytotoxicity induced by lipid peroxidation. Short-chain fatty aldehydes are not good substrates. Can use both NADP(+) and NAD(+) as electron acceptor in vitro, however in vivo preference will depend on their tissue levels. Low activity towards acetaldehyde and 3,4-dihydroxyphenylacetaldehyde. Able to metabolize aromatic aldehydes such as benzaldehyde to their acid form. The chain is Aldehyde dehydrogenase family 3 member B1 (ALDH3B1) from Bos taurus (Bovine).